We begin with the raw amino-acid sequence, 125 residues long: PEP-dependent dihydroxyacetone kinase 2, phosphoryl donor subunit DhaM (125 aa).

The PTS EIIA type-4 domain maps to 1–125; sequence MISIVLVSHS…AILQELTNVH (125 aa). H9 functions as the Tele-phosphohistidine intermediate in the catalytic mechanism.

Belongs to the PEP-utilizing enzyme family. Homodimer. The dihydroxyacetone kinase complex is composed of a homodimer of DhaM, a homodimer of DhaK and the subunit DhaL.

It localises to the cytoplasm. It carries out the reaction dihydroxyacetone + phosphoenolpyruvate = dihydroxyacetone phosphate + pyruvate. Functionally, component of the dihydroxyacetone kinase complex, which is responsible for the phosphoenolpyruvate (PEP)-dependent phosphorylation of dihydroxyacetone. DhaM serves as the phosphoryl donor. Is phosphorylated by phosphoenolpyruvate in an EI- and HPr-dependent reaction, and a phosphorelay system on histidine residues finally leads to phosphoryl transfer to DhaL and dihydroxyacetone. The polypeptide is PEP-dependent dihydroxyacetone kinase 2, phosphoryl donor subunit DhaM (Listeria innocua serovar 6a (strain ATCC BAA-680 / CLIP 11262)).